The primary structure comprises 507 residues: Cystathionine beta-synthase (507 aa).

Position 53 is an N6-(pyridoxal phosphate)lysine (Lys-53). Asn-84 is a pyridoxal 5'-phosphate binding site. Ser-134 bears the Phosphoserine mark. Pyridoxal 5'-phosphate is bound by residues 196–200 and Ser-289; that span reads GTGGT. A phosphoserine mark is found at Ser-350 and Ser-424. The CBS domain maps to 373–432; that stretch reads HLKPVVSVKETAKVTDVIKILKDNGFDQLPVLTEDGKLSGLVTLSELLRKLSINNSNNDN.

It belongs to the cysteine synthase/cystathionine beta-synthase family. The cofactor is pyridoxal 5'-phosphate.

It carries out the reaction L-homocysteine + L-serine = L,L-cystathionine + H2O. It participates in amino-acid biosynthesis; L-cysteine biosynthesis; L-cysteine from L-homocysteine and L-serine: step 1/2. The sequence is that of Cystathionine beta-synthase (CYS4) from Saccharomyces cerevisiae (strain ATCC 204508 / S288c) (Baker's yeast).